A 209-amino-acid chain; its full sequence is Outer-membrane lipoprotein carrier protein (209 aa).

The N-terminal stretch at 1–21 (MKLLKLLSVAALSAASMMANA) is a signal peptide.

It belongs to the LolA family. In terms of assembly, monomer.

Its subcellular location is the periplasm. Its function is as follows. Participates in the translocation of lipoproteins from the inner membrane to the outer membrane. Only forms a complex with a lipoprotein if the residue after the N-terminal Cys is not an aspartate (The Asp acts as a targeting signal to indicate that the lipoprotein should stay in the inner membrane). In Hahella chejuensis (strain KCTC 2396), this protein is Outer-membrane lipoprotein carrier protein.